Reading from the N-terminus, the 1410-residue chain is non-specific serine/threonine protein kinase (1410 aa).

The 273-residue stretch at 27 to 299 (THYVSQLNNS…LLEKYRTIYF (273 aa)) folds into the Protein kinase domain. Residues 33-41 (LNNSRFLKT) and Lys-54 contribute to the ATP site. The active-site Proton acceptor is Asp-147. HEAT repeat units follow at residues 441 to 478 (TKLD…EVKH), 485 to 525 (NIFV…KANL), 556 to 594 (RKLQ…YFGR), 596 to 633 (KTND…LLGP), and 635 to 672 (TMEQ…TRFV). 3 WD repeats span residues 1037–1076 (FDGT…NEKS), 1187–1226 (ADYG…QIRA), and 1230–1273 (GESL…CKHV).

It belongs to the protein kinase superfamily. Ser/Thr protein kinase family. Component of the autophagy-specific VPS34 PI3-kinase complex I composed of VPS15, VPS30, VPS34, ATG14 and ATG38; and of the VPS34 PI3-kinase complex II composed of VPS15, VPS30, VPS34 and VPS38. Autophosphorylated.

It localises to the golgi apparatus. The protein localises to the trans-Golgi network membrane. It is found in the endosome membrane. The catalysed reaction is L-seryl-[protein] + ATP = O-phospho-L-seryl-[protein] + ADP + H(+). The enzyme catalyses L-threonyl-[protein] + ATP = O-phospho-L-threonyl-[protein] + ADP + H(+). In terms of biological role, serine/threonine-protein kinase that plays a role in signaling in modulation of host immune response, intracellular survival and virulence. Required for impediment of phagosomal maturation in THP-1 macrophages. Regulatory subunit of the autophagy-specific VPS34 PI3-kinase complex I essential to recruit the ATG8-phosphatidylinositol conjugate and the ATG12-ATG5 conjugate to the pre-autophagosomal structure. Within the PS34 PI3-kinase complex I, VPS15-mediated phosphorylation of VPS34 may be required for recruiting VPS34 to the membrane but not for activation of its PI3K activity. Is also involved in endosome-to-Golgi retrograde transport as part of the VPS34 PI3-kinase complex II. This second complex is required for the endosome-to-Golgi retrieval of PEP1 and KEX2, and the recruitment of VPS5 and VPS7, two components of the retromer complex, to endosomal membranes (probably through the synthesis of a specific pool of phosphatidylinositol 3-phosphate recruiting the retromer to the endosomes). By regulating VPS34 kinase activity, VPS15 appears to be essential for the efficient delivery of soluble hydrolases to the yeast vacuole. This is non-specific serine/threonine protein kinase from Candida glabrata (strain ATCC 2001 / BCRC 20586 / JCM 3761 / NBRC 0622 / NRRL Y-65 / CBS 138) (Yeast).